The chain runs to 184 residues: Class II hydrophobin 6 (184 aa).

An N-terminal signal peptide occupies residues 1 to 16 (MNFMLLSAALASMAVA). Disulfide bonds link cysteine 122–cysteine 169, cysteine 130–cysteine 160, cysteine 131–cysteine 143, and cysteine 170–cysteine 181.

The protein belongs to the cerato-ulmin hydrophobin family. As to quaternary structure, homotetramer. Further self-assembles to form highly ordered films at water-air interfaces through intermolecular interactions. As to expression, expressed in the mycellium.

It localises to the secreted. In terms of biological role, aerial growth, conidiation, and dispersal of filamentous fungi in the environment rely upon a capability of their secreting small amphipathic proteins called hydrophobins (HPBs) with low sequence identity. Class I can self-assemble into an outermost layer of rodlet bundles on aerial cell surfaces, conferring cellular hydrophobicity that supports fungal growth, development and dispersal; whereas Class II form highly ordered films at water-air interfaces through intermolecular interactions but contribute nothing to the rodlet structure. Hcf-6 is a class II hydrophobin that is involved in adhesion and in tomato plants infection. Is secreted to form a coat both around and beneath the fungus. This Passalora fulva (Tomato leaf mold) protein is Class II hydrophobin 6.